Here is a 260-residue protein sequence, read N- to C-terminus: Nuclear receptor subfamily 0 group B member 2 (260 aa).

The region spanning 16-260 (SHPTILYTLL…ELLEDMLLLR (245 aa)) is the NR LBD domain. R57 is modified (symmetric dimethylarginine; by PRMT5).

It belongs to the nuclear hormone receptor family. NR0 subfamily. As to quaternary structure, heterodimer; efficient DNA binding requires dimerization with another bHLH protein. Interacts (via N-terminus) with NEUROD1 (via N-terminus and C-terminus). Interacts with ID2. Interacts with NR1I3 and EID1. Interacts with RARA, RXRA, THRB, NR5A1, NR5A2, PPARA and PPARG. Interacts with RORG, NFIL3, NR1D1 and BHLHE41. Interacts with HNF4A; the resulting heterodimer is transcriptionally inactive. Interacts with DDX3X; this interaction disrupts the interaction between HNF4 and NR0B2/SHP that forms inactive heterodimers and enhances the formation of active HNF4 homodimers. Post-translationally, arginine methylation by PRMT5 enhances repression activity of metabolic genes in liver in response to bile acid signaling, by increasing interaction with cofactors. As to expression, detected in kidney, testis, heart and liver.

The protein localises to the cytoplasm. It is found in the nucleus. Functionally, transcriptional regulator that acts as a negative regulator of receptor-dependent signaling pathways. Specifically inhibits transactivation of the nuclear receptor with which it interacts. Inhibits transcriptional activity of NEUROD1 on E-box-containing promoter by interfering with the coactivation function of the p300/CBP-mediated transcription complex for NEUROD1. Essential component of the liver circadian clock which via its interaction with NR1D1 and RORG regulates NPAS2-mediated hepatic lipid metabolism. Regulates the circadian expression of cytochrome P450 (CYP) enzymes. Represses: NR5A2 and HNF4A to down-regulate CYP2C38, NFLI3 to up-regulate CYP2A5, BHLHE41/HNF1A axis to up-regulate CYP1A2, CYP2E1 and CYP3A11, and NR1D1 to up-regulate CYP2B10, CYP4A10 and CYP4A14. The chain is Nuclear receptor subfamily 0 group B member 2 (Nr0b2) from Rattus norvegicus (Rat).